We begin with the raw amino-acid sequence, 76 residues long: MKLTCMMIIAVLFLTAWTFATADDSGNGLENLFSKAHHEMKNPEASKLNKRCLAKGDFCNLITQDCCDGICFIFCP.

The first 22 residues, 1–22 (MKLTCMMIIAVLFLTAWTFATA), serve as a signal peptide directing secretion. Intrachain disulfides connect Cys-52-Cys-67, Cys-59-Cys-71, and Cys-66-Cys-75.

The protein belongs to the conotoxin O1 superfamily. Is not hydroxylated. Expressed by the venom duct.

The protein localises to the secreted. Functionally, probable toxin that inhibits ion channels. The sequence is that of Conotoxin Am6.3 from Conus amadis (Amadis cone).